Reading from the N-terminus, the 432-residue chain is MLCPSSMDEEGSEEIGFLGDLSVGMDTFIHRIDSTEVIYQPRRKRAKLVGKYLMGDLLGEGSYGKVKEMLDSDTLCRRAVKILKKKKLRRIPNGEANVKKEIQLLRRLRHRNVIQLVDVLYNEEKQKMYMVMEYCVCGMQEMLDSVQDKHFPVFQAHGYFCQLIDGLEYLHSQGIVHKDIKPGNLLLTTDGTLKISDLGVAEALHPFAEGDTCRTSQGSPAFQPPEIANGLDTFSGFKVDIWSAGVTLYNITTGLYPFEGDNIYKLFENIGKGDYSIPEECGPLLSDLLRGMLEYDPAKRFSIQQIRQHNWFRKKHPHMDPIVPIPPSPETKDRWRSLTVVPYLEDLHGYSEEEDLCDFEDDIIYTQDFTVPGQVAEDDYFAQTQSTAPSKQLCMNGTESQLKTERRVSSSSQRKASTTGSKVRKLSACKQQ.

Residues 52-312 (YLMGDLLGEG…IQQIRQHNWF (261 aa)) enclose the Protein kinase domain. ATP contacts are provided by residues 58 to 66 (LGEGSYGKV) and K81. Catalysis depends on D179, which acts as the Proton acceptor. Residue T192 is modified to Phosphothreonine; by autocatalysis. Residues 398–432 (TESQLKTERRVSSSSQRKASTTGSKVRKLSACKQQ) form a disordered region. Positions 409 to 421 (SSSSQRKASTTGS) are enriched in polar residues. Residues 422 to 432 (KVRKLSACKQQ) show a composition bias toward basic residues. S427 is subject to Phosphoserine; by PKA.

It belongs to the protein kinase superfamily. CAMK Ser/Thr protein kinase family. LKB1 subfamily. In terms of assembly, catalytic component of a trimeric complex composed of STK11/LKB1, STRAD (STRADA or STRADB) and CAB39/MO25 (CAB39/MO25alpha or CAB39L/MO25beta). Mg(2+) is required as a cofactor. Requires Mn(2+) as cofactor. Post-translationally, phosphorylated by a cAMP-dependent protein kinase. Autophosphorylated in a reaction that prefers Mn(2+) to Mg(2+). Oocytes, eggs and early embryos.

Its subcellular location is the nucleus. The protein localises to the cytoplasm. The enzyme catalyses L-seryl-[protein] + ATP = O-phospho-L-seryl-[protein] + ADP + H(+). It catalyses the reaction L-threonyl-[protein] + ATP = O-phospho-L-threonyl-[protein] + ADP + H(+). Its function is as follows. Tumor suppressor serine/threonine-protein kinase that controls the activity of AMP-activated protein kinase (AMPK) family members, thereby playing a role in various processes such as cell metabolism, cell polarity, apoptosis and DNA damage response. Acts by phosphorylating the T-loop of AMPK family proteins, leading to promote their activity. This is Serine/threonine-protein kinase stk11 from Xenopus laevis (African clawed frog).